Consider the following 602-residue polypeptide: Elongation factor 4 (602 aa).

In terms of domain architecture, tr-type G spans 7-189 (RNIRNFSIIA…AIVQRIPAPQ (183 aa)). Residues 19-24 (DHGKST) and 136-139 (NKID) contribute to the GTP site.

The protein belongs to the TRAFAC class translation factor GTPase superfamily. Classic translation factor GTPase family. LepA subfamily.

It is found in the cell inner membrane. It catalyses the reaction GTP + H2O = GDP + phosphate + H(+). Functionally, required for accurate and efficient protein synthesis under certain stress conditions. May act as a fidelity factor of the translation reaction, by catalyzing a one-codon backward translocation of tRNAs on improperly translocated ribosomes. Back-translocation proceeds from a post-translocation (POST) complex to a pre-translocation (PRE) complex, thus giving elongation factor G a second chance to translocate the tRNAs correctly. Binds to ribosomes in a GTP-dependent manner. This chain is Elongation factor 4, found in Xylella fastidiosa (strain M23).